Consider the following 237-residue polypeptide: Dihydroceramide fatty acyl 2-hydroxylase FAH1 (237 aa).

A run of 2 helical transmembrane segments spans residues 50 to 70 and 80 to 100; these read LTLT…VWCI and LPEI…FEYV. The Zn(2+) site is built by H102, H107, H123, H126, and H127. 2 consecutive transmembrane segments (helical) span residues 137 to 157 and 164 to 184; these read VFPP…AKAI and PALF…HYYL. H181, H185, H201, H204, and H205 together coordinate Zn(2+).

It belongs to the sterol desaturase family. Interacts with CYTB5-A, CYTB5-B, CYTB5-C and CYTB5-D. Interacts indirectly with BI-1 via CYTB5-D. The cofactor is Zn(2+). Expressed in leaves, roots, flowers and seeds.

Its subcellular location is the endoplasmic reticulum membrane. The enzyme catalyses an N-(1,2-saturated acyl)sphinganine + 2 Fe(II)-[cytochrome b5] + O2 + 2 H(+) = an N-[(2'R)-hydroxyacyl]sphinganine + 2 Fe(III)-[cytochrome b5] + H2O. In terms of biological role, fatty acid 2-hydroxylase involved in the alpha-hydroxylation of sphingolipid-associated very long-chain fatty acids (VLCFA). Probably involved in the resistance response to oxidative stress. This is Dihydroceramide fatty acyl 2-hydroxylase FAH1 from Arabidopsis thaliana (Mouse-ear cress).